A 332-amino-acid chain; its full sequence is MAEASPRTETSTDDTDENLMLEPGNAALAVVSDSSDRSRDKNGDQKTMRRLAQNREAARKSRLRKKAYVQQLENSRLKLTQLEQELQRARQQGIFISSSADQSHSMSGNGALAFDTEYARWLEEHNRQVNELRAAVNAHAGDTELRSVVEKIMSHYDEIFKQKGNAAKADVFHVLSGMWKTPAERCFLWLGGFRPSELLKLLSTQLEPLTEQQLSGICNLQQSSQQAEDALSQGMEALQQSLAETLAGSIGSSGSGSTGNVANYMGQMAMAMGKLGTLENFLSQADNLRQQTLQQMQRILTTRQSARALLVISDYSSRLRALSSLWLARPKE.

The tract at residues 1 to 48 (MAEASPRTETSTDDTDENLMLEPGNAALAVVSDSSDRSRDKNGDQKTM) is disordered. The span at 34 to 47 (SSDRSRDKNGDQKT) shows a compositional bias: basic and acidic residues. A bZIP domain is found at 44–107 (DQKTMRRLAQ…SSADQSHSMS (64 aa)). The interval 46-66 (KTMRRLAQNREAARKSRLRKK) is basic motif. Positions 47-142 (TMRRLAQNRE…RAAVNAHAGD (96 aa)) form a coiled coil. Residues 72–86 (LENSRLKLTQLEQEL) form a leucine-zipper region. Positions 111 to 329 (ALAFDTEYAR…RALSSLWLAR (219 aa)) constitute a DOG1 domain.

It belongs to the bZIP family. In terms of assembly, binds DNA as a dimer.

The protein resides in the nucleus. Its function is as follows. Transcriptional activator that binds specifically to the DNA sequence 5'-TGACG-3'. Recognizes ocs elements like the as-1 motif of the cauliflower mosaic virus 35S promoter. Binding to the as-1-like cis elements mediate auxin- and salicylic acid-inducible transcription. Binds to the hexamer motif 5'-ACGTCA-3' of histone gene promoters. In Triticum aestivum (Wheat), this protein is Transcription factor HBP-1b(c38).